Consider the following 653-residue polypeptide: MSTEEDQKLFLSIGLDEKRAKDTLKNKDLTALLKTIIEEASVSKGCDKSIGNLLYSLATCQQVNSPIRSNVSKAIGEEKIKTTIQFQAATQYLKDNKEFNQDTFNDFCGVGVVITPEQIQKAIDDLFTKKATEISEKKWHIPIGDLLNPLKESLKWADLKEVKIMLDKKLETTLGPKVVEAKEKKVAATTTAPVKKIEEQLAAITLKQDASLPTPKRLKIRECSPKFANQRVEVHAWAHHVRNQKKIVFLELRDGTGFLQCVLSGDLVHPSIIDKLLREATVKIVGTLVIPPADKKCPGGVELQADYWELLGPSNADLEGVINQESNVDHLFDQRHIMMRGTRASSIMKIRSLCLFAFRQHFFENHYMEVTPPTLVNTYCEGGSELFTVDYFGKPAYLTQSSQLYLETMLPVLGDNFTITQSYRAEKARTRRHLTEFLHLEAECPFITYEELQDRIEFLVVDVCEKLFKMDPELILSVNPDFKVPKRPFMRMNYSDAIEYCKKNGIQKKLEDGTEVDFEFGDDIPEAQERRMNDQIGEPIFLCRFPAEMKAFYMARCPEDRTLTESLDLLMPGVGEIVGGSMRISDFNELVAAYKKAGLDTDEYYWFTDQRKYGTTQHGGYGLGVERFLTWMLKEEHIRNVCVYQRTKDRITP.

It belongs to the class-II aminoacyl-tRNA synthetase family.

The protein localises to the cytoplasm. It catalyses the reaction tRNA(Asn) + L-asparagine + ATP = L-asparaginyl-tRNA(Asn) + AMP + diphosphate + H(+). The polypeptide is Asparagine--tRNA ligase, cytoplasmic (asnS1) (Dictyostelium discoideum (Social amoeba)).